Here is a 103-residue protein sequence, read N- to C-terminus: Cystatin-A8 (103 aa).

A disordered region spans residues 1-20; sequence MESEEMLAGGLTEPRPATPE. Residues 51 to 55 carry the Secondary area of contact motif; it reads QVVAG.

The protein belongs to the cystatin family.

It is found in the cytoplasm. This is an intracellular thiol proteinase inhibitor. The sequence is that of Cystatin-A8 from Sus scrofa (Pig).